Reading from the N-terminus, the 72-residue chain is Translation initiation factor IF-1 (72 aa).

The 71-residue stretch at 2–72 folds into the S1-like domain; the sequence is AKDDVIEVDG…TRGRITYRFK (71 aa).

This sequence belongs to the IF-1 family. As to quaternary structure, component of the 30S ribosomal translation pre-initiation complex which assembles on the 30S ribosome in the order IF-2 and IF-3, IF-1 and N-formylmethionyl-tRNA(fMet); mRNA recruitment can occur at any time during PIC assembly.

It is found in the cytoplasm. Its function is as follows. One of the essential components for the initiation of protein synthesis. Stabilizes the binding of IF-2 and IF-3 on the 30S subunit to which N-formylmethionyl-tRNA(fMet) subsequently binds. Helps modulate mRNA selection, yielding the 30S pre-initiation complex (PIC). Upon addition of the 50S ribosomal subunit IF-1, IF-2 and IF-3 are released leaving the mature 70S translation initiation complex. This is Translation initiation factor IF-1 from Lactococcus lactis subsp. lactis (strain IL1403) (Streptococcus lactis).